We begin with the raw amino-acid sequence, 86 residues long: Cell division topological specificity factor (86 aa).

It belongs to the MinE family.

Prevents the cell division inhibition by proteins MinC and MinD at internal division sites while permitting inhibition at polar sites. This ensures cell division at the proper site by restricting the formation of a division septum at the midpoint of the long axis of the cell. This is Cell division topological specificity factor from Shewanella woodyi (strain ATCC 51908 / MS32).